We begin with the raw amino-acid sequence, 336 residues long: Fructose-1,6-bisphosphatase class 1 (336 aa).

4 residues coordinate Mg(2+): Glu90, Asp112, Leu114, and Asp115. Substrate contacts are provided by residues Asp115–Ser118, Asn207, and Lys273. Glu279 contributes to the Mg(2+) binding site.

This sequence belongs to the FBPase class 1 family. Homotetramer. Requires Mg(2+) as cofactor.

The protein resides in the cytoplasm. The enzyme catalyses beta-D-fructose 1,6-bisphosphate + H2O = beta-D-fructose 6-phosphate + phosphate. It participates in carbohydrate biosynthesis; gluconeogenesis. In Xanthomonas oryzae pv. oryzae (strain PXO99A), this protein is Fructose-1,6-bisphosphatase class 1.